Here is a 419-residue protein sequence, read N- to C-terminus: Tyrosine--tRNA ligase 2 (419 aa).

Tyrosine 34 contributes to the L-tyrosine binding site. The short motif at 39–48 (PTGDSMHIGH) is the 'HIGH' region element. Tyrosine 168 and glutamine 172 together coordinate L-tyrosine. A 'KMSKS' region motif is present at residues 230 to 234 (KFGKS). Residue lysine 233 participates in ATP binding. The 67-residue stretch at 352–418 (KNIVEWLVDL…GKKNYSLVKL (67 aa)) folds into the S4 RNA-binding domain.

Belongs to the class-I aminoacyl-tRNA synthetase family. TyrS type 1 subfamily. Homodimer.

Its subcellular location is the cytoplasm. It catalyses the reaction tRNA(Tyr) + L-tyrosine + ATP = L-tyrosyl-tRNA(Tyr) + AMP + diphosphate + H(+). Catalyzes the attachment of tyrosine to tRNA(Tyr) in a two-step reaction: tyrosine is first activated by ATP to form Tyr-AMP and then transferred to the acceptor end of tRNA(Tyr). This Bacillus anthracis protein is Tyrosine--tRNA ligase 2.